Consider the following 477-residue polypeptide: Glutamyl-tRNA reductase (477 aa).

Substrate is bound by residues 49-52, Ser109, 114-116, and Gln120; these read TCNR and EGQ. The active-site Nucleophile is the Cys50. 221–226 is a binding site for NADP(+); it reads GAGSMS.

The protein belongs to the glutamyl-tRNA reductase family. As to quaternary structure, homodimer.

The enzyme catalyses (S)-4-amino-5-oxopentanoate + tRNA(Glu) + NADP(+) = L-glutamyl-tRNA(Glu) + NADPH + H(+). The protein operates within porphyrin-containing compound metabolism; protoporphyrin-IX biosynthesis; 5-aminolevulinate from L-glutamyl-tRNA(Glu): step 1/2. In terms of biological role, catalyzes the NADPH-dependent reduction of glutamyl-tRNA(Glu) to glutamate 1-semialdehyde (GSA). This is Glutamyl-tRNA reductase from Thermobifida fusca (strain YX).